The sequence spans 75 residues: Small, acid-soluble spore protein Tlp (75 aa).

It belongs to the Tlp family.

The protein localises to the spore core. This is Small, acid-soluble spore protein Tlp from Geobacillus kaustophilus (strain HTA426).